The sequence spans 736 residues: Polyphosphate kinase (736 aa).

Asn91 contributes to the ATP binding site. Residues Arg421 and Arg451 each contribute to the Mg(2+) site. His481 acts as the Phosphohistidine intermediate in catalysis. Positions 514, 610, and 638 each coordinate ATP.

It belongs to the polyphosphate kinase 1 (PPK1) family. Mg(2+) serves as cofactor. An intermediate of this reaction is the autophosphorylated ppk in which a phosphate is covalently linked to a histidine residue through a N-P bond.

The catalysed reaction is [phosphate](n) + ATP = [phosphate](n+1) + ADP. In terms of biological role, catalyzes the reversible transfer of the terminal phosphate of ATP to form a long-chain polyphosphate (polyP). The sequence is that of Polyphosphate kinase from Pseudomonas syringae pv. tomato (strain ATCC BAA-871 / DC3000).